The following is a 130-amino-acid chain: Protein UL145 (130 aa).

In terms of assembly, interacts with host DDB1; this interaction promotes STAT2 degradation.

In terms of biological role, plays a role in the inhibition of host innate immunity by exploiting host DDB1-cullin RING ubiquitin ligases (CRLs). Mechanistically, recruits host DDB1 via a DCAF-like interaction motif to antagonize IFN signaling by STAT2 degradation. This Homo sapiens (Human) protein is Protein UL145 (UL145).